The primary structure comprises 214 residues: Adenylate kinase (214 aa).

11–16 (GTGKGT) contributes to the ATP binding site. The interval 31–61 (SSGDLFRFYAKEEKTALAEEIKSYINNGLYV) is NMP. Residues Ser32, Arg37, 59-61 (LYV), 87-90 (GYPR), and Gln94 contribute to the AMP site. The segment at 124–163 (LRRSCPQCKRIYNINSVDFKPKVANLCDLCKVELIHRKDD) is LID. Arg125 provides a ligand contact to ATP. Zn(2+)-binding residues include Cys128 and Cys131. Residue 134–135 (IY) coordinates ATP. Residues Cys150 and Cys153 each coordinate Zn(2+). Arg160 and Arg171 together coordinate AMP. Lys199 contributes to the ATP binding site.

The protein belongs to the adenylate kinase family. In terms of assembly, monomer.

The protein localises to the cytoplasm. The enzyme catalyses AMP + ATP = 2 ADP. It functions in the pathway purine metabolism; AMP biosynthesis via salvage pathway; AMP from ADP: step 1/1. Its function is as follows. Catalyzes the reversible transfer of the terminal phosphate group between ATP and AMP. Plays an important role in cellular energy homeostasis and in adenine nucleotide metabolism. The sequence is that of Adenylate kinase from Mycoplasmoides gallisepticum (strain R(low / passage 15 / clone 2)) (Mycoplasma gallisepticum).